The primary structure comprises 78 residues: Large ribosomal subunit protein bL28 (78 aa).

It belongs to the bacterial ribosomal protein bL28 family.

In Leifsonia xyli subsp. xyli (strain CTCB07), this protein is Large ribosomal subunit protein bL28.